The sequence spans 359 residues: Gap junction alpha-5 protein (359 aa).

The Cytoplasmic portion of the chain corresponds to 1-19 (MGDWSFLGEFLEEVHKHST). Residues 20 to 40 (VIGKVWLTVLFIFRMLVLGTA) traverse the membrane as a helical segment. Topologically, residues 41–76 (AESSWGDEQADFLCDTMQPGCENVCYDQAFPISHIR) are extracellular. A helical membrane pass occupies residues 77-97 (YWVLQVIFVSTPSLVYLGHAV). The Cytoplasmic portion of the chain corresponds to 98-165 (HMVRVQEKRK…CSILIRTTME (68 aa)). The chain crosses the membrane as a helical span at residues 166–186 (VAFIVGQYLLYGVFLDTLHVC). Over 187–206 (RRSPCPHPVNCYVSRPTEKN) the chain is Extracellular. Residues 207 to 227 (VFIVFMLAVAGLSLFLSLAEL) traverse the membrane as a helical segment. Residues 228 to 359 (YHLGWKKIRQ…SKARSDDLSV (132 aa)) are Cytoplasmic-facing. 2 disordered regions span residues 285–305 (SNKM…VRSQ) and 317–359 (RYAQ…DLSV). 2 positions are modified to phosphoserine: Ser-354 and Ser-358.

This sequence belongs to the connexin family. Alpha-type (group II) subfamily. A connexon is composed of a hexamer of connexins.

The protein resides in the cell membrane. Its subcellular location is the cell junction. The protein localises to the gap junction. One gap junction consists of a cluster of closely packed pairs of transmembrane channels, the connexons, through which materials of low MW diffuse from one cell to a neighboring cell. The chain is Gap junction alpha-5 protein (GJA5) from Bos taurus (Bovine).